The following is a 167-amino-acid chain: Ribosome maturation factor RimM (167 aa).

The 75-residue stretch at 92-166 folds into the PRC barrel domain; that stretch reads DDEFYHTDLI…RIVADPPEGL (75 aa).

The protein belongs to the RimM family. In terms of assembly, binds ribosomal protein uS19.

It localises to the cytoplasm. Functionally, an accessory protein needed during the final step in the assembly of 30S ribosomal subunit, possibly for assembly of the head region. Essential for efficient processing of 16S rRNA. May be needed both before and after RbfA during the maturation of 16S rRNA. It has affinity for free ribosomal 30S subunits but not for 70S ribosomes. This Ruegeria pomeroyi (strain ATCC 700808 / DSM 15171 / DSS-3) (Silicibacter pomeroyi) protein is Ribosome maturation factor RimM.